The following is a 108-amino-acid chain: Large ribosomal subunit protein uL24 (108 aa).

This sequence belongs to the universal ribosomal protein uL24 family. Part of the 50S ribosomal subunit.

In terms of biological role, one of two assembly initiator proteins, it binds directly to the 5'-end of the 23S rRNA, where it nucleates assembly of the 50S subunit. Its function is as follows. One of the proteins that surrounds the polypeptide exit tunnel on the outside of the subunit. In Mycoplasma capricolum subsp. capricolum (strain California kid / ATCC 27343 / NCTC 10154), this protein is Large ribosomal subunit protein uL24.